The primary structure comprises 359 residues: Membrane-bound lytic murein transglycosylase C (359 aa).

A signal peptide spans 1–16 (MKKYLALALIAPLLIS). Cysteine 17 carries the N-palmitoyl cysteine lipid modification. Cysteine 17 is lipidated: S-diacylglycerol cysteine.

This sequence belongs to the transglycosylase Slt family.

The protein resides in the cell outer membrane. The catalysed reaction is Exolytic cleavage of the (1-&gt;4)-beta-glycosidic linkage between N-acetylmuramic acid (MurNAc) and N-acetylglucosamine (GlcNAc) residues in peptidoglycan, from either the reducing or the non-reducing ends of the peptidoglycan chains, with concomitant formation of a 1,6-anhydrobond in the MurNAc residue.. Murein-degrading enzyme. May play a role in recycling of muropeptides during cell elongation and/or cell division. This Escherichia coli O139:H28 (strain E24377A / ETEC) protein is Membrane-bound lytic murein transglycosylase C.